Here is a 476-residue protein sequence, read N- to C-terminus: Bifunctional protein GlmU (476 aa).

Residues 1–232 form a pyrophosphorylase region; the sequence is MGDLAAIILA…PVEVMGVNDR (232 aa). Residues 9–12, K23, Q75, and 80–81 each bind UDP-N-acetyl-alpha-D-glucosamine; these read LAAG and GT. A Mg(2+)-binding site is contributed by D105. Residues G142, E157, N172, and N230 each contribute to the UDP-N-acetyl-alpha-D-glucosamine site. Residue N230 coordinates Mg(2+). The tract at residues 233–253 is linker; the sequence is AQLAEAGRFARQRINRELMLD. The tract at residues 254 to 476 is N-acetyltransferase; that stretch reads GVTIVDPAAT…DGWKLKQRDQ (223 aa). UDP-N-acetyl-alpha-D-glucosamine contacts are provided by R353 and K371. The active-site Proton acceptor is the H383. UDP-N-acetyl-alpha-D-glucosamine is bound by residues Y386 and N397. Residues 406–407, S425, A443, and R460 contribute to the acetyl-CoA site; that span reads NY.

This sequence in the N-terminal section; belongs to the N-acetylglucosamine-1-phosphate uridyltransferase family. In the C-terminal section; belongs to the transferase hexapeptide repeat family. Homotrimer. Requires Mg(2+) as cofactor.

The protein resides in the cytoplasm. The enzyme catalyses alpha-D-glucosamine 1-phosphate + acetyl-CoA = N-acetyl-alpha-D-glucosamine 1-phosphate + CoA + H(+). The catalysed reaction is N-acetyl-alpha-D-glucosamine 1-phosphate + UTP + H(+) = UDP-N-acetyl-alpha-D-glucosamine + diphosphate. It functions in the pathway nucleotide-sugar biosynthesis; UDP-N-acetyl-alpha-D-glucosamine biosynthesis; N-acetyl-alpha-D-glucosamine 1-phosphate from alpha-D-glucosamine 6-phosphate (route II): step 2/2. It participates in nucleotide-sugar biosynthesis; UDP-N-acetyl-alpha-D-glucosamine biosynthesis; UDP-N-acetyl-alpha-D-glucosamine from N-acetyl-alpha-D-glucosamine 1-phosphate: step 1/1. The protein operates within bacterial outer membrane biogenesis; LPS lipid A biosynthesis. In terms of biological role, catalyzes the last two sequential reactions in the de novo biosynthetic pathway for UDP-N-acetylglucosamine (UDP-GlcNAc). The C-terminal domain catalyzes the transfer of acetyl group from acetyl coenzyme A to glucosamine-1-phosphate (GlcN-1-P) to produce N-acetylglucosamine-1-phosphate (GlcNAc-1-P), which is converted into UDP-GlcNAc by the transfer of uridine 5-monophosphate (from uridine 5-triphosphate), a reaction catalyzed by the N-terminal domain. In Geobacter metallireducens (strain ATCC 53774 / DSM 7210 / GS-15), this protein is Bifunctional protein GlmU.